We begin with the raw amino-acid sequence, 261 residues long: Glucosamine-6-phosphate deaminase (261 aa).

Aspartate 67 (proton acceptor; for enolization step) is an active-site residue. Catalysis depends on asparagine 136, which acts as the For ring-opening step. The active-site Proton acceptor; for ring-opening step is the histidine 138. Glutamate 143 serves as the catalytic For ring-opening step.

This sequence belongs to the glucosamine/galactosamine-6-phosphate isomerase family. NagB subfamily.

The enzyme catalyses alpha-D-glucosamine 6-phosphate + H2O = beta-D-fructose 6-phosphate + NH4(+). It functions in the pathway amino-sugar metabolism; N-acetylneuraminate degradation; D-fructose 6-phosphate from N-acetylneuraminate: step 5/5. In terms of biological role, catalyzes the reversible isomerization-deamination of glucosamine 6-phosphate (GlcN6P) to form fructose 6-phosphate (Fru6P) and ammonium ion. The protein is Glucosamine-6-phosphate deaminase of Cutibacterium acnes (strain DSM 16379 / KPA171202) (Propionibacterium acnes).